A 583-amino-acid chain; its full sequence is Septin-9 (583 aa).

M1 bears the N-acetylmethionine mark. The segment covering M1–G14 has biased composition (polar residues). Positions M1–T49 are disordered. S30 bears the Phosphoserine mark. 2 positions are modified to phosphothreonine: T42 and T49. N6-acetyllysine is present on K62. Residues D79–S105 are disordered. Phosphoserine occurs at positions 82, 85, and 89. Position 143 is a phosphothreonine (T143). The disordered stretch occupies residues V166–D252. Residues L204–S221 are compositionally biased toward polar residues. Position 276 is a phosphotyrosine (Y276). Residues Q293–E565 enclose the Septin-type G domain. Residues G303–S310 form a G1 motif region. A GTP-binding site is contributed by G303–S310. Phosphoserine is present on residues S325 and S330. GTP is bound by residues T337, G363, K443–E451, G499, and R514. The interval D360 to G363 is G3 motif. Residues A442 to D445 are G4 motif.

This sequence belongs to the TRAFAC class TrmE-Era-EngA-EngB-Septin-like GTPase superfamily. Septin GTPase family. In terms of assembly, septins polymerize into heterooligomeric protein complexes that form filaments, and associate with cellular membranes, actin filaments, and microtubules. GTPase activity is required for filament formation. Interacts with SEPTIN2, SEPTIN6, SEPTIN7, SEPTIN11 and SEPTIN14. Interacts with RTKN and ARHGEF18. Expressed in all tissues examined except muscle. Isoforms are differentially expressed in testes, kidney, liver, heart, spleen and brain.

It is found in the cytoplasm. The protein localises to the cytoskeleton. Its function is as follows. Filament-forming cytoskeletal GTPase. May play a role in cytokinesis (Potential). The polypeptide is Septin-9 (Mus musculus (Mouse)).